The primary structure comprises 129 residues: Small ribosomal subunit protein uS11 (129 aa).

It belongs to the universal ribosomal protein uS11 family. As to quaternary structure, part of the 30S ribosomal subunit. Interacts with proteins S7 and S18. Binds to IF-3.

Located on the platform of the 30S subunit, it bridges several disparate RNA helices of the 16S rRNA. Forms part of the Shine-Dalgarno cleft in the 70S ribosome. The sequence is that of Small ribosomal subunit protein uS11 from Aliivibrio fischeri (strain ATCC 700601 / ES114) (Vibrio fischeri).